The sequence spans 1217 residues: Splicing factor 3B subunit 3 (1217 aa).

Interaction with PHF5A, SF3B1 and SF3B5 stretches follow at residues 105–119 (ETFG…VPGQ) and 145–168 (NRDA…TLVY). Serine 156 carries the phosphoserine modification. Interaction with SF3B1 and SF3B5 regions lie at residues 193 to 231 (DNDP…LEEH) and 786 to 804 (RKFV…ETDH). Residues 1028–1049 (TYPRWVTTASLLDYDTVAGADK) form an interaction with SF3B1 region. Residues 1100–1123 (TVLSLQKTTLIPGGSESLVYTTLS) are interaction with SF3B5. Threonine 1200 is modified (phosphothreonine).

This sequence belongs to the RSE1 family. Component of the 17S U2 SnRNP complex, a ribonucleoprotein complex that contains small nuclear RNA (snRNA) U2 and a number of specific proteins. Part of the SF3B subcomplex of the 17S U2 SnRNP complex. SF3B associates with the splicing subcomplex SF3A and a 12S RNA unit to form the U2 small nuclear ribonucleoproteins complex (U2 snRNP). Within the SF3B subcomplex, interacts directly with SF3B1 (via HEAT domain), SF3B5 and PHF5A. Identified in the spliceosome A complex; remains associated with the spliceosome throughout the splicing process. Component of the spliceosome B complex. Identified in the spliceosome C complex. Identified in the spliceosome E complex. Component of the minor (U12-type spliceosome) spliceosome. Within this complex, interacts with SCNM1. Associates with the STAGA transcription coactivator-HAT complex. Interacts with SUPT3H. Interacts with TAF3.

Its subcellular location is the nucleus. Its function is as follows. Component of the 17S U2 SnRNP complex of the spliceosome, a large ribonucleoprotein complex that removes introns from transcribed pre-mRNAs. The 17S U2 SnRNP complex (1) directly participates in early spliceosome assembly and (2) mediates recognition of the intron branch site during pre-mRNA splicing by promoting the selection of the pre-mRNA branch-site adenosine, the nucleophile for the first step of splicing. Within the 17S U2 SnRNP complex, SF3B3 is part of the SF3B subcomplex, which is required for 'A' complex assembly formed by the stable binding of U2 snRNP to the branchpoint sequence in pre-mRNA. Sequence independent binding of SF3A and SF3B subcomplexes upstream of the branch site is essential, it may anchor U2 snRNP to the pre-mRNA. May also be involved in the assembly of the 'E' complex. Also acts as a component of the minor spliceosome, which is involved in the splicing of U12-type introns in pre-mRNAs. The sequence is that of Splicing factor 3B subunit 3 (SF3B3) from Pongo abelii (Sumatran orangutan).